Here is a 419-residue protein sequence, read N- to C-terminus: Pyrophosphate--fructose 6-phosphate 1-phosphotransferase (419 aa).

Position 13 (glycine 13) interacts with diphosphate. Substrate is bound by residues 142-144 (TVD), 190-192 (MGR), glutamate 247, and 297-300 (YLQR). Aspartate 144 (proton acceptor) is an active-site residue.

Belongs to the phosphofructokinase type A (PFKA) family. PPi-dependent PFK group II subfamily. Clade 'B2' sub-subfamily. As to quaternary structure, homodimer. Requires Mg(2+) as cofactor.

The protein resides in the cytoplasm. It catalyses the reaction beta-D-fructose 6-phosphate + diphosphate = beta-D-fructose 1,6-bisphosphate + phosphate + H(+). It participates in carbohydrate degradation; glycolysis; D-glyceraldehyde 3-phosphate and glycerone phosphate from D-glucose: step 3/4. Its activity is regulated as follows. Non-allosteric. Catalyzes the phosphorylation of D-fructose 6-phosphate, the first committing step of glycolysis. Uses inorganic phosphate (PPi) as phosphoryl donor instead of ATP like common ATP-dependent phosphofructokinases (ATP-PFKs), which renders the reaction reversible, and can thus function both in glycolysis and gluconeogenesis. Consistently, PPi-PFK can replace the enzymes of both the forward (ATP-PFK) and reverse (fructose-bisphosphatase (FBPase)) reactions. This chain is Pyrophosphate--fructose 6-phosphate 1-phosphotransferase, found in Halomonas elongata (strain ATCC 33173 / DSM 2581 / NBRC 15536 / NCIMB 2198 / 1H9).